The chain runs to 116 residues: Methionine-R-sulfoxide reductase B1 (116 aa).

In terms of domain architecture, MsrB spans 1-106 (MSFCSFFGGE…FSSSLKFIPK (106 aa)). The Zn(2+) site is built by cysteine 23, cysteine 26, cysteine 71, and cysteine 74. Selenocysteine 95 serves as the catalytic Nucleophile. Position 95 (selenocysteine 95) is a non-standard amino acid, selenocysteine.

It belongs to the MsrB Met sulfoxide reductase family. It depends on Zn(2+) as a cofactor. Truncated MSRB1/SEPX1 proteins produced by failed UGA/Sec decoding are ubiquitinated by the CRL2(FEM1C) E3 ubiquitin-protein ligase complex.

Its subcellular location is the cytoplasm. The protein resides in the nucleus. It is found in the cytoskeleton. It carries out the reaction L-methionyl-[protein] + [thioredoxin]-disulfide + H2O = L-methionyl-(R)-S-oxide-[protein] + [thioredoxin]-dithiol. The catalysed reaction is [thioredoxin]-disulfide + L-methionine + H2O = L-methionine (R)-S-oxide + [thioredoxin]-dithiol. Its function is as follows. Methionine-sulfoxide reductase that specifically reduces methionine (R)-sulfoxide back to methionine. While in many cases, methionine oxidation is the result of random oxidation following oxidative stress, methionine oxidation is also a post-translational modification that takes place on specific residue. Acts as a regulator of actin assembly by reducing methionine (R)-sulfoxide mediated by MICALs (MICAL1, MICAL2 or MICAL3) on actin, thereby promoting filament repolymerization. Plays a role in innate immunity by reducing oxidized actin, leading to actin repolymerization in macrophages. This is Methionine-R-sulfoxide reductase B1 (MSRB1) from Bos taurus (Bovine).